Reading from the N-terminus, the 1404-residue chain is G8 domain-containing protein DDB_G0286897 (1404 aa).

Positions 1 to 20 are cleaved as a signal peptide; it reads MNYFKYFIFVVFLFFTIVKC. A run of 2 helical transmembrane segments spans residues 97 to 117 and 128 to 148; these read LVGF…GLFA and IIIL…IQSI. 11 N-linked (GlcNAc...) asparagine glycosylation sites follow: Asn-352, Asn-365, Asn-413, Asn-481, Asn-639, Asn-838, Asn-979, Asn-1003, Asn-1017, Asn-1253, and Asn-1334. The G8 domain maps to 553-679; the sequence is STWASGFVPL…YHNTWTKLST (127 aa).

This sequence belongs to the comF family.

It is found in the membrane. The chain is G8 domain-containing protein DDB_G0286897 from Dictyostelium discoideum (Social amoeba).